Reading from the N-terminus, the 281-residue chain is 4-hydroxy-3-methylbut-2-enyl diphosphate reductase (281 aa).

Residue Cys-12 participates in [4Fe-4S] cluster binding. (2E)-4-hydroxy-3-methylbut-2-enyl diphosphate-binding residues include His-41 and His-74. Dimethylallyl diphosphate contacts are provided by His-41 and His-74. 2 residues coordinate isopentenyl diphosphate: His-41 and His-74. Cys-96 contributes to the [4Fe-4S] cluster binding site. Position 124 (His-124) interacts with (2E)-4-hydroxy-3-methylbut-2-enyl diphosphate. His-124 provides a ligand contact to dimethylallyl diphosphate. His-124 contacts isopentenyl diphosphate. The active-site Proton donor is Glu-126. Thr-164 is a binding site for (2E)-4-hydroxy-3-methylbut-2-enyl diphosphate. Cys-193 lines the [4Fe-4S] cluster pocket. (2E)-4-hydroxy-3-methylbut-2-enyl diphosphate is bound by residues Ser-221, Asn-223, and Ser-265. Dimethylallyl diphosphate is bound by residues Ser-221, Asn-223, and Ser-265. Ser-221, Asn-223, and Ser-265 together coordinate isopentenyl diphosphate.

This sequence belongs to the IspH family. Requires [4Fe-4S] cluster as cofactor.

The catalysed reaction is isopentenyl diphosphate + 2 oxidized [2Fe-2S]-[ferredoxin] + H2O = (2E)-4-hydroxy-3-methylbut-2-enyl diphosphate + 2 reduced [2Fe-2S]-[ferredoxin] + 2 H(+). It catalyses the reaction dimethylallyl diphosphate + 2 oxidized [2Fe-2S]-[ferredoxin] + H2O = (2E)-4-hydroxy-3-methylbut-2-enyl diphosphate + 2 reduced [2Fe-2S]-[ferredoxin] + 2 H(+). The protein operates within isoprenoid biosynthesis; dimethylallyl diphosphate biosynthesis; dimethylallyl diphosphate from (2E)-4-hydroxy-3-methylbutenyl diphosphate: step 1/1. It participates in isoprenoid biosynthesis; isopentenyl diphosphate biosynthesis via DXP pathway; isopentenyl diphosphate from 1-deoxy-D-xylulose 5-phosphate: step 6/6. Catalyzes the conversion of 1-hydroxy-2-methyl-2-(E)-butenyl 4-diphosphate (HMBPP) into a mixture of isopentenyl diphosphate (IPP) and dimethylallyl diphosphate (DMAPP). Acts in the terminal step of the DOXP/MEP pathway for isoprenoid precursor biosynthesis. This is 4-hydroxy-3-methylbut-2-enyl diphosphate reductase from Nitratidesulfovibrio vulgaris (strain DSM 19637 / Miyazaki F) (Desulfovibrio vulgaris).